The chain runs to 223 residues: Phosphoribosylformylglycinamidine synthase subunit PurQ (223 aa).

A Glutamine amidotransferase type-1 domain is found at 3–223 (FAVLVFPGSN…MVKSWREQHV (221 aa)). Catalysis depends on Cys-85, which acts as the Nucleophile. Catalysis depends on residues His-193 and Glu-195.

Part of the FGAM synthase complex composed of 1 PurL, 1 PurQ and 2 PurS subunits.

It is found in the cytoplasm. It catalyses the reaction N(2)-formyl-N(1)-(5-phospho-beta-D-ribosyl)glycinamide + L-glutamine + ATP + H2O = 2-formamido-N(1)-(5-O-phospho-beta-D-ribosyl)acetamidine + L-glutamate + ADP + phosphate + H(+). The catalysed reaction is L-glutamine + H2O = L-glutamate + NH4(+). It functions in the pathway purine metabolism; IMP biosynthesis via de novo pathway; 5-amino-1-(5-phospho-D-ribosyl)imidazole from N(2)-formyl-N(1)-(5-phospho-D-ribosyl)glycinamide: step 1/2. In terms of biological role, part of the phosphoribosylformylglycinamidine synthase complex involved in the purines biosynthetic pathway. Catalyzes the ATP-dependent conversion of formylglycinamide ribonucleotide (FGAR) and glutamine to yield formylglycinamidine ribonucleotide (FGAM) and glutamate. The FGAM synthase complex is composed of three subunits. PurQ produces an ammonia molecule by converting glutamine to glutamate. PurL transfers the ammonia molecule to FGAR to form FGAM in an ATP-dependent manner. PurS interacts with PurQ and PurL and is thought to assist in the transfer of the ammonia molecule from PurQ to PurL. The chain is Phosphoribosylformylglycinamidine synthase subunit PurQ from Staphylococcus aureus (strain bovine RF122 / ET3-1).